Reading from the N-terminus, the 240-residue chain is Transmembrane protein 65 (240 aa).

A mitochondrion-targeting transit peptide spans 1–61; that stretch reads MSRLLPLLRS…RRLGTHPKKE (61 aa). Residues 62-110 are Cytoplasmic-facing; the sequence is PMEALNTAQGARDFIYSLHSTERSCLLKELHRFESIAIAQEKLEAPPPT. The helical transmembrane segment at 111–131 threads the bilayer; sequence PGQLRYVFIHNAIPFIGFGFL. The Extracellular segment spans residues 132-142; it reads DNAIMIVAGTH. A helical membrane pass occupies residues 143 to 165; that stretch reads IEMSIGIILGISTMAAAALGNLV. Residues 166 to 209 are Cytoplasmic-facing; sequence SDLAGLGLAGYVEALASRLGLSIPDLTPKQVDMWQTRLSTHLGK. The helical transmembrane segment at 210 to 230 threads the bilayer; it reads AVGVTIGCILGMFPLIFFGGG. Residues 231-240 lie on the Extracellular side of the membrane; that stretch reads EEDEKLETKS.

As to quaternary structure, monomer. Homodimer. Interacts with GJA1. Interacts weakly with DSP. Interacts with SCN1B. In terms of tissue distribution, predominantly expressed the ventricular tissue (at protein level).

Its subcellular location is the cell membrane. It is found in the mitochondrion inner membrane. Functionally, essential for maintaining proper cardiac intercalated disk (ICD) structure and function as well as cardiac conduction velocity in the heart. Its association with SCN1B is required for stabilizing the perinexus in the ICD and for localization of GJA1 and SCN5A to the ICD. May regulate the function of the gap junction protein GJA1 and may contribute to the stability and proper localization of GJA1 to cardiac intercalated disk thereby regulating gap junction communication. May also play a role in the regulation of mitochondrial respiration and mitochondrial DNA copy number maintenance. This Homo sapiens (Human) protein is Transmembrane protein 65 (TMEM65).